A 182-amino-acid chain; its full sequence is Constitutive photomorphogenesis protein 10 (182 aa).

The region spanning 36 to 182 is the UBC core domain; the sequence is ASGKRIQREM…AKEWTLRFAK (147 aa).

It belongs to the ubiquitin-conjugating enzyme family. Component of the CDD complex, at least composed of COP10, DET1 and DDB1A. Interacts with E3 ubiquitin ligase COP1. Interacts with E2 ubiquitin conjugating UBC5. Interacts with CSN3, CSN4 and CSN8 subunits of the COP9 complex. As to expression, expressed in flower, leaf, stem and seedling. Expressed at lower level in root.

Its subcellular location is the nucleus. Its function is as follows. Component of light signal transduction machinery. Involved in repression of photomorphogenesis in darkness by participating in the CDD complex, a complex probably required to regulate the activity of ubiquitin conjugating enzymes (E2s). Repression of photomorphogenesis is probably mediated by ubiquitination and subsequent degradation of photomorphogenesis-promoting factors such as HY5, HYH and LAF1. Although strongly related to ubiquitin-conjugating enzyme, it has no catalytic activity by itself due to the absence of the conserved Cys active site at position 120. It can however enhance the activity of E2 conjugating enzymes. In Arabidopsis thaliana (Mouse-ear cress), this protein is Constitutive photomorphogenesis protein 10 (COP10).